Reading from the N-terminus, the 290-residue chain is U3 small nucleolar ribonucleoprotein protein IMP4 (290 aa).

The Brix domain maps to 86–267 (PRIIVTTSRD…LFELRLGTLE (182 aa)).

In terms of assembly, component of a heterotrimeric complex containing IMP3, IMP4 and MPP10. Interacts with MPP10. Component of the ribosomal small subunit (SSU) processome composed of at least 40 protein subunits and snoRNA U3.

Its subcellular location is the nucleus. It localises to the nucleolus. In terms of biological role, required for the early cleavages at sites A0, A1 and A2 during 18S ribosomal pre-RNA processing. The chain is U3 small nucleolar ribonucleoprotein protein IMP4 (IMP4) from Saccharomyces cerevisiae (strain ATCC 204508 / S288c) (Baker's yeast).